The primary structure comprises 133 residues: ATP synthase epsilon chain, chloroplastic (133 aa).

This sequence belongs to the ATPase epsilon chain family. As to quaternary structure, F-type ATPases have 2 components, CF(1) - the catalytic core - and CF(0) - the membrane proton channel. CF(1) has five subunits: alpha(3), beta(3), gamma(1), delta(1), epsilon(1). CF(0) has three main subunits: a, b and c.

Its subcellular location is the plastid. The protein resides in the chloroplast thylakoid membrane. Functionally, produces ATP from ADP in the presence of a proton gradient across the membrane. This is ATP synthase epsilon chain, chloroplastic from Vitis vinifera (Grape).